Reading from the N-terminus, the 306-residue chain is Mitochondrial substrate carrier family protein ucpA (306 aa).

Residues 1 to 15 (MSVNLNNNKNNKNKV) are Mitochondrial intermembrane-facing. Solcar repeat units follow at residues 13–103 (NKVA…ISNA), 112–204 (YFFL…CKNL), and 211–301 (DGIY…FKKL). The helical transmembrane segment at 16–36 (AIGFISGSLASICATTVTNPI) threads the bilayer. The Mitochondrial matrix portion of the chain corresponds to 37 to 83 (ELVKTRLQLQGELQLSQRIYNGVWDAFKQIYKTEGIRGLQSGLIPAY). The chain crosses the membrane as a helical span at residues 84–103 (FSQATMQGIRLGSFDLISNA). Over 104–117 (LGAKPNQDYFFLKN) the chain is Mitochondrial intermembrane. The helical transmembrane segment at 118 to 138 (LLAGATAGAIGAAAGSPFDLV) threads the bilayer. The Mitochondrial matrix portion of the chain corresponds to 139–174 (KVRMQAANMYKNDPQFVGYSSSFAAFKQIIQKEGFK). A helical transmembrane segment spans residues 175-195 (GLTRGMLTSAQRTAVGSAIQL). Residues 196–211 (STYGSCKNLVLNFVDD) are Mitochondrial intermembrane-facing. The helical transmembrane segment at 212–232 (GIYAYIISSMVAGFIVTFGMN) threads the bilayer. Residues 233 to 276 (PFDVARTRLYFQGKGNSHGEIYKGLMDCVYKTVKKEGFGAVYKG) lie on the Mitochondrial matrix side of the membrane. The chain crosses the membrane as a helical span at residues 277–295 (FWAHYLRLGPHTILTLVFW). At 296–306 (EQFKKLFSGEL) the chain is on the mitochondrial intermembrane side.

The protein belongs to the mitochondrial carrier (TC 2.A.29) family.

Its subcellular location is the mitochondrion inner membrane. Functionally, mitochondrial solute carriers shuttle metabolites, nucleotides, and cofactors through the mitochondrial inner membrane. Transports oxaloacetate and sulfate. The polypeptide is Mitochondrial substrate carrier family protein ucpA (ucpA) (Dictyostelium discoideum (Social amoeba)).